Consider the following 97-residue polypeptide: MASVNRNSEIIKKLKTDKRLLEEINERRESNCLVERSNQVSLLRVQKRHFHGAYKSFTHDQVKKPVPDSDRSSWVKLSLFVHKEKRHFPPKNNAIFG.

The protein belongs to the SPATA45 family.

The protein is Spermatogenesis-associated protein 45 (SPATA45) of Bos taurus (Bovine).